The primary structure comprises 158 residues: Low molecular weight phosphotyrosine protein phosphatase (158 aa).

The residue at position 2 (Ala-2) is an N-acetylalanine. The active-site Nucleophile is Cys-13. Arg-19 is a catalytic residue. Asp-130 functions as the Proton donor in the catalytic mechanism. A phosphotyrosine mark is found at Tyr-132 and Tyr-133.

Belongs to the low molecular weight phosphotyrosine protein phosphatase family. As to quaternary structure, interacts with EPHA2; dephosphorylates EPHA2. Interacts with EPHB1. In terms of assembly, interacts with the SH3 domain of SPTAN1. There is no interaction observed for isoform 2. Phosphorylated by LCK. Phosphorylation at Tyr-132 increases its phosphatase activity.

The protein resides in the cytoplasm. The catalysed reaction is O-phospho-L-tyrosyl-[protein] + H2O = L-tyrosyl-[protein] + phosphate. It carries out the reaction a phosphate monoester + H2O = an alcohol + phosphate. Its activity is regulated as follows. Inhibited by sulfhydryl reagents. Functionally, acts on tyrosine phosphorylated proteins, low-MW aryl phosphates and natural and synthetic acyl phosphates with differences in substrate specificity between isoform 1 and isoform 2. This chain is Low molecular weight phosphotyrosine protein phosphatase, found in Rattus norvegicus (Rat).